The sequence spans 206 residues: MKHDIAAKLLQIGAVALQPNEPFTWSSGLKSPIYCDNRLTLAYPGVRRLIADALAELIRTHFPKADLIAGTAAGIPHAAWVSERLELPMCYVRSQAKRHGKGKQIEGQARPGQRVVVIEDLISTGGTSLAAVRALKEAGCEVLGVAAIFTYGLEKAKQAFAAENLPAYTLTDYNTLIETAVRLGAVSEHDLATLRQWRENPEEWGS.

Residues arginine 93, lysine 97, histidine 99, and glutamate 119–threonine 127 each bind 5-phospho-alpha-D-ribose 1-diphosphate. Serine 123 is an orotate binding site.

It belongs to the purine/pyrimidine phosphoribosyltransferase family. PyrE subfamily. Homodimer. Mg(2+) is required as a cofactor.

It catalyses the reaction orotidine 5'-phosphate + diphosphate = orotate + 5-phospho-alpha-D-ribose 1-diphosphate. Its pathway is pyrimidine metabolism; UMP biosynthesis via de novo pathway; UMP from orotate: step 1/2. Catalyzes the transfer of a ribosyl phosphate group from 5-phosphoribose 1-diphosphate to orotate, leading to the formation of orotidine monophosphate (OMP). This Bacillus caldolyticus protein is Orotate phosphoribosyltransferase.